The sequence spans 35 residues: SDSKIGDGCFGLPLDHIGSVSGLGCNRPVQNRPKK.

C9 and C25 form a disulfide bridge.

As to expression, expressed by the venom gland.

It is found in the secreted. Snake venom natriuretic peptide that exhibits vasoactive and probable hypotensive activity. Is only weakly active on natriuretic peptide receptor-C (NPR3). Stimulates cGMP production through the natriuretic peptide receptor 1 (NPR1) with moderate potencies for the rat NPR1 (EC(50)=2020 nM), and very weak potencies over human NPR1 (15% activation at 10 uM). In vivo, does not impact systolic and diastolic blood pressure, as well as heart rate, when intravenously injected in conscious rabbits. Does not affect the bradycardia due to cardiac afferent stimulation (Bezold-Jarisch reflex). This is Natriuretic peptide TNPa from Oxyuranus microlepidotus (Inland taipan).